The chain runs to 82 residues: Large ribosomal subunit protein bL31B (82 aa).

This sequence belongs to the bacterial ribosomal protein bL31 family. Type B subfamily. In terms of assembly, part of the 50S ribosomal subunit.

The sequence is that of Large ribosomal subunit protein bL31B from Acinetobacter baylyi (strain ATCC 33305 / BD413 / ADP1).